Consider the following 594-residue polypeptide: Glutamate decarboxylase 1 (594 aa).

Positions 1–13 (MASSTPSSSATSS) are enriched in low complexity. The segment at 1-22 (MASSTPSSSATSSNAGADPNTA) is disordered. Position 78 is a phosphoserine (Ser-78). 190–192 (QLS) lines the 4-aminobutanoate pocket. At Lys-405 the chain carries N6-(pyridoxal phosphate)lysine. Arg-567 is a 4-aminobutanoate binding site.

Belongs to the group II decarboxylase family. As to quaternary structure, homodimer. Pyridoxal 5'-phosphate is required as a cofactor.

The catalysed reaction is L-glutamate + H(+) = 4-aminobutanoate + CO2. Catalyzes the synthesis of the inhibitory neurotransmitter gamma-aminobutyric acid (GABA) with pyridoxal 5'-phosphate as cofactor. In Canis lupus familiaris (Dog), this protein is Glutamate decarboxylase 1 (GAD1).